The sequence spans 569 residues: Urease subunit alpha (569 aa).

Residues 131 to 569 (GGIDTHIHFI…LPLAQRYLLL (439 aa)) form the Urease domain. Ni(2+) contacts are provided by His136, His138, and Lys219. Lys219 is subject to N6-carboxylysine. His221 is a substrate binding site. His248 and His274 together coordinate Ni(2+). Residue His322 is the Proton donor of the active site. Position 362 (Asp362) interacts with Ni(2+).

This sequence belongs to the metallo-dependent hydrolases superfamily. Urease alpha subunit family. Heterotrimer of UreA (gamma), UreB (beta) and UreC (alpha) subunits. Three heterotrimers associate to form the active enzyme. Requires Ni cation as cofactor. Carboxylation allows a single lysine to coordinate two nickel ions.

It is found in the cytoplasm. It catalyses the reaction urea + 2 H2O + H(+) = hydrogencarbonate + 2 NH4(+). It functions in the pathway nitrogen metabolism; urea degradation; CO(2) and NH(3) from urea (urease route): step 1/1. The sequence is that of Urease subunit alpha from Synechococcus sp. (strain WH7805).